Here is a 345-residue protein sequence, read N- to C-terminus: Carbamoyl phosphate synthase small chain (345 aa).

The tract at residues 1–169 (MKKYLVMEDG…FVKGEEGGTV (169 aa)) is CPSase. The L-glutamine site is built by S45, G213, and G215. The Glutamine amidotransferase type-1 domain occupies 168-345 (TVLFIDLGSK…GEMKRRIGYA (178 aa)). The active-site Nucleophile is the C242. F243, Q246, N282, G284, and Y285 together coordinate L-glutamine. Catalysis depends on residues H321 and E323.

This sequence belongs to the CarA family. Composed of two chains; the small (or glutamine) chain promotes the hydrolysis of glutamine to ammonia, which is used by the large (or ammonia) chain to synthesize carbamoyl phosphate. Tetramer of heterodimers (alpha,beta)4.

The enzyme catalyses hydrogencarbonate + L-glutamine + 2 ATP + H2O = carbamoyl phosphate + L-glutamate + 2 ADP + phosphate + 2 H(+). The catalysed reaction is L-glutamine + H2O = L-glutamate + NH4(+). It participates in amino-acid biosynthesis; L-arginine biosynthesis; carbamoyl phosphate from bicarbonate: step 1/1. Its pathway is pyrimidine metabolism; UMP biosynthesis via de novo pathway; (S)-dihydroorotate from bicarbonate: step 1/3. In terms of biological role, small subunit of the glutamine-dependent carbamoyl phosphate synthetase (CPSase). CPSase catalyzes the formation of carbamoyl phosphate from the ammonia moiety of glutamine, carbonate, and phosphate donated by ATP, constituting the first step of 2 biosynthetic pathways, one leading to arginine and/or urea and the other to pyrimidine nucleotides. The small subunit (glutamine amidotransferase) binds and cleaves glutamine to supply the large subunit with the substrate ammonia. The protein is Carbamoyl phosphate synthase small chain of Thermoplasma volcanium (strain ATCC 51530 / DSM 4299 / JCM 9571 / NBRC 15438 / GSS1).